The chain runs to 94 residues: MKLTCMMIVALLFLTAWTFVTAVDSKNELENRGGWGQAGGWGKLFPMARDEMKNSEVSKLDNKRKCAAAGEACVIPIIGNVFCCKGYCLFVCIS.

The N-terminal stretch at 1–22 (MKLTCMMIVALLFLTAWTFVTA) is a signal peptide. Residues 23–62 (VDSKNELENRGGWGQAGGWGKLFPMARDEMKNSEVSKLDN) constitute a propeptide that is removed on maturation. 3 disulfide bridges follow: Cys-66–Cys-84, Cys-73–Cys-88, and Cys-83–Cys-92.

Belongs to the conotoxin O1 superfamily. In terms of tissue distribution, expressed by the venom duct.

The protein resides in the secreted. The sequence is that of Conotoxin Qc6.1 from Conus quercinus (Oak cone).